The following is a 1938-amino-acid chain: Histone-lysine N-methyltransferase SETD1B (1938 aa).

The segment covering 1 to 20 (MSFKEAKPGERGKNPEDHGR) has biased composition (basic and acidic residues). The segment at 1–44 (MSFKEAKPGERGKNPEDHGRKQAASWMNGMEAANQPSTSAEKKS) is disordered. One can recognise an RRM domain in the interval 111–199 (DEFYVGPVPP…NIIHAELDTK (89 aa)). 11 disordered regions span residues 226-357 (LDAS…ENTF), 369-484 (FPRT…TRIA), 496-630 (LISS…EVTP), 652-688 (GFPP…VPPP), 916-1125 (KEPP…SSPV), 1147-1174 (HQTA…HKQD), 1187-1206 (MQQN…NEEE), 1327-1373 (KTLS…GNSL), 1413-1468 (FPES…VPHM), 1496-1528 (ECEF…PKKP), and 1744-1772 (DEPP…RRSE). 4 stretches are compositionally biased toward polar residues: residues 254–290 (VTPN…QGTP), 298–312 (PFSQ…QTTP), 375–407 (LSHS…PQTS), and 446–457 (DSTTEQKASFAQ). Low complexity predominate over residues 512–531 (SPISSSSSQLSPIPPYSSSS). 2 stretches are compositionally biased toward polar residues: residues 532-546 (HYQD…SSTG) and 569-585 (SLCQ…QINQ). Over residues 588–599 (RKMETLDNKELV) the composition is skewed to basic and acidic residues. The segment covering 619–628 (EDMEISDDEV) has biased composition (acidic residues). Composition is skewed to acidic residues over residues 976 to 990 (SEGE…DDGE) and 1054 to 1114 (DSSD…EDFF). The segment covering 1159–1174 (KDLDVPLVESKEHKQD) has biased composition (basic and acidic residues). Over residues 1329 to 1343 (LSEEELPRTPGRDIL) the composition is skewed to basic and acidic residues. 2 stretches are compositionally biased toward polar residues: residues 1349–1358 (LGKSQSTETI) and 1441–1453 (EPTS…NSVP). The span at 1454–1464 (SPIPFASPPRG) shows a compositional bias: pro residues. Over residues 1751 to 1765 (QGKSIPAQPQASTRA) the composition is skewed to polar residues. Residues 1770 to 1775 (RSEQRR) carry the RxxxRR motif motif. Residues 1799–1916 (KKIRFCKSHI…VNEEITYDYK (118 aa)) enclose the SET domain. S-adenosyl-L-methionine is bound at residue tyrosine 1915. Positions 1922-1938 (VKIPCLCGAENCRGTLN) constitute a Post-SET domain.

Belongs to the class V-like SAM-binding methyltransferase superfamily. In terms of assembly, component of the SET1B/COMPASS complex.

It localises to the nucleus speckle. Its subcellular location is the chromosome. It carries out the reaction L-lysyl(4)-[histone H3] + 3 S-adenosyl-L-methionine = N(6),N(6),N(6)-trimethyl-L-lysyl(4)-[histone H3] + 3 S-adenosyl-L-homocysteine + 3 H(+). Its function is as follows. Histone methyltransferase that specifically methylates 'Lys-4' of histone H3, when part of the SET1 histone methyltransferase (HMT) complex, but not if the neighboring 'Lys-9' residue is already methylated. H3 'Lys-4' methylation represents a specific tag for epigenetic transcriptional activation. This Xenopus laevis (African clawed frog) protein is Histone-lysine N-methyltransferase SETD1B (setd1b).